The following is a 627-amino-acid chain: Muscarinic acetylcholine receptor gar-2 (627 aa).

At 1 to 9 the chain is on the extracellular side; the sequence is MAVASVLLA. A helical membrane pass occupies residues 10–30; that stretch reads LFMLFLSIVTVIGNLAVLLSY. Residues 31–41 are Cytoplasmic-facing; sequence YLDKNIRQPTN. Residues 42-62 form a helical membrane-spanning segment; the sequence is YFIFSLAISDLLIGLEGIPVY. Residues 63–81 lie on the Extracellular side of the membrane; the sequence is TAFYLNNNEWIWGDVLCDL. Cys79 and Cys160 are joined by a disulfide. A helical transmembrane segment spans residues 82–102; that stretch reads WLSIDYIVCLASIYTVLGITV. The Cytoplasmic portion of the chain corresponds to 103-122; sequence DRYYSVKKPATYRNWRTPGR. A helical membrane pass occupies residues 123–143; it reads VVLIIIFIWLVPSILFSVSIF. Residues 144 to 172 lie on the Extracellular side of the membrane; sequence GYGTFTGTGRILKETECYVQFMTNPYLNM. A helical membrane pass occupies residues 173–193; sequence GMYISYYWTTLFVMLYLYWGI. Residues 194–549 lie on the Cytoplasmic side of the membrane; the sequence is YRAAKKLALK…ENRARKALRT (356 aa). 3 disordered regions span residues 222–266, 423–442, and 449–475; these read VSVR…VGTP, REDE…ENGG, and ANDE…HDPN. Low complexity predominate over residues 231–264; sequence NSSSDSPNDTSNSSKCFRTAPPTTTVQTTQTNVG. Residues 459 to 475 are compositionally biased toward basic and acidic residues; that stretch reads KESEQKEEMTPENHDPN. Residues 550–570 form a helical membrane-spanning segment; it reads ITFILGSFIILWTPFYVLATI. Residues 571-586 are Extracellular-facing; the sequence is YGFCETCKASPSFNTL. A helical transmembrane segment spans residues 587-609; sequence YTISYYLCYMNSPLNPFCYAMAN. The Cytoplasmic segment spans residues 610 to 627; the sequence is QQFKKTLTRIFKGDFRRV.

Belongs to the G-protein coupled receptor 1 family. Muscarinic acetylcholine receptor subfamily. As to expression, expressed in putative sensory neurons, many cells of the ventral cord and in the HSN motor neurons. Expressed in some cholinergic motor neurons and GABAergic motor neurons, which are the two major types of ventral cord motor neurons.

It localises to the cell membrane. The protein resides in the cell projection. The protein localises to the axon. The muscarinic acetylcholine receptor mediates various cellular responses, including inhibition of adenylate cyclase, breakdown of phosphoinositides and modulation of potassium channels through the action of G proteins. Primary transducing effect is Pi turnover. Regulates the activity of ventral cord motor neurons. Couples to the G(o)-alpha G-protein subunit goa-1 to negatively regulate cholinergic receptor activity in the presence of high levels of the neurotransmitter acetylcholine in ventral cord motor neurons. As acetylcholine depolarizes body wall muscles, modulation of acetylcholine levels most likely results in the control locomotory behavior and egg-laying. The sequence is that of Muscarinic acetylcholine receptor gar-2 from Caenorhabditis elegans.